A 379-amino-acid polypeptide reads, in one-letter code: Cytochrome b (379 aa).

The next 4 membrane-spanning stretches (helical) occupy residues 33–53 (FGSLLGMCLGLQILTGLFLAM), 77–98 (WLIRYMHANGASMFFIFLYFHI), 113–133 (WNMGVLLLLTTMATAFMGYVL), and 178–198 (FFAFHFILPFIITAMVMIHLL). Residues histidine 83 and histidine 97 each coordinate heme b. 2 residues coordinate heme b: histidine 182 and histidine 196. Position 201 (histidine 201) interacts with a ubiquinone. The next 4 membrane-spanning stretches (helical) occupy residues 226-246 (IKDILGALFMIITLMSLVMFS), 288-308 (LGGVLALASSILILMLFPILH), 320-340 (LSQCLMWMLVTNLLILTWIGG), and 347-367 (FITIGQMASMTYFFTTLILMP).

Belongs to the cytochrome b family. The cytochrome bc1 complex contains 11 subunits: 3 respiratory subunits (MT-CYB, CYC1 and UQCRFS1), 2 core proteins (UQCRC1 and UQCRC2) and 6 low-molecular weight proteins (UQCRH/QCR6, UQCRB/QCR7, UQCRQ/QCR8, UQCR10/QCR9, UQCR11/QCR10 and a cleavage product of UQCRFS1). This cytochrome bc1 complex then forms a dimer. Heme b serves as cofactor.

It is found in the mitochondrion inner membrane. In terms of biological role, component of the ubiquinol-cytochrome c reductase complex (complex III or cytochrome b-c1 complex) that is part of the mitochondrial respiratory chain. The b-c1 complex mediates electron transfer from ubiquinol to cytochrome c. Contributes to the generation of a proton gradient across the mitochondrial membrane that is then used for ATP synthesis. This chain is Cytochrome b (MT-CYB), found in Ctenomys leucodon (White-toothed tuco-tuco).